The following is a 288-amino-acid chain: UAP56-interacting factor (288 aa).

The UAP56-binding motif motif lies at Thr-11–Glu-29. The interval Asp-183–Ser-202 is disordered.

This sequence belongs to the UIF family.

The protein resides in the nucleus. It is found in the nucleoplasm. The protein localises to the nucleus speckle. In terms of biological role, required for mRNA export from the nucleus to the cytoplasm. Acts as an adapter that uses the ddx39b/uap56-nfx1 pathway to ensure efficient mRNA export and delivering to the nuclear pore. The chain is UAP56-interacting factor (fyttd1) from Xenopus laevis (African clawed frog).